A 1847-amino-acid polypeptide reads, in one-letter code: Cilia- and flagella-associated protein 65 (1847 aa).

Residues 112–132 (FFTIIPQPIFLSPGITLTLPI) form a helical membrane-spanning segment. In terms of domain architecture, MSP spans 805-914 (DLKLDTHKSI…VHYRIRLVGM (110 aa)). Residues 1457 to 1483 (QRELMRQYHKELQEWNEEKARQEVEFT) adopt a coiled-coil conformation. Residues 1668-1721 (YEGRKSKEQEEDLFGKMPGGQEDDEEEEEDEEEAEEEEEEIEEEMSKDEEDIDK) form a disordered region. The span at 1688–1720 (QEDDEEEEEDEEEAEEEEEEIEEEMSKDEEDID) shows a compositional bias: acidic residues.

The protein belongs to the CFAP65 family. Interacts with CFAP47. Predominantly expressed in testis. Highly expressed in round and elongating spermatids. Expressed also in certain ciliated organs, such as the brain, lung and kidney.

Its subcellular location is the cell projection. It is found in the cilium. It localises to the flagellum membrane. The protein localises to the cytoplasmic vesicle. The protein resides in the secretory vesicle. Its subcellular location is the acrosome membrane. It is found in the cytoplasm. Functionally, plays a role in flagellar formation and sperm motility. The polypeptide is Cilia- and flagella-associated protein 65 (Mus musculus (Mouse)).